The primary structure comprises 269 residues: MDKKEKRPTVLFFDSGVGGFSVYREAKKLLPNWHYLYCFDNAGFPYSERKEESIIHRTLAACQLINQRYPLDAIVIACNTASTVVLPPLRAAFDIPIIGTVPAIKPASEITKTKHIGLLATKGTVKRHYIDELIDKFAQDCIVERLGTTKLVEIAEQKIRGHSVDLISLKDELSSWAGMADLDTLVLGCTHFPLIKDEIQLCLPQVKYFMDPSAAIAKRIKYLLDDKNLQAQNEKYNQMFCTAHFPEESQFKKALHLWGFESLEVIKID.

Residues 14-15 (DS) and 46-47 (YS) each bind substrate. The active-site Proton donor/acceptor is the C78. A substrate-binding site is contributed by 79–80 (NT). Catalysis depends on C189, which acts as the Proton donor/acceptor. 190 to 191 (TH) is a binding site for substrate.

This sequence belongs to the aspartate/glutamate racemases family.

It catalyses the reaction L-glutamate = D-glutamate. It participates in cell wall biogenesis; peptidoglycan biosynthesis. In terms of biological role, provides the (R)-glutamate required for cell wall biosynthesis. In Haemophilus influenzae (strain PittGG), this protein is Glutamate racemase.